A 164-amino-acid chain; its full sequence is Leucine-rich single-pass membrane protein 2 (164 aa).

The chain crosses the membrane as a helical span at residues 97–117 (GFLLLLALLVLTCLVLALLAV).

The protein resides in the membrane. The polypeptide is Leucine-rich single-pass membrane protein 2 (LSMEM2) (Homo sapiens (Human)).